A 384-amino-acid polypeptide reads, in one-letter code: Deoxyguanosinetriphosphate triphosphohydrolase-like protein (384 aa).

The 137-residue stretch at 62 to 198 (RLTHSLEVST…AALADDISYI (137 aa)) folds into the HD domain.

The protein belongs to the dGTPase family. Type 2 subfamily.

The sequence is that of Deoxyguanosinetriphosphate triphosphohydrolase-like protein from Rickettsia peacockii (strain Rustic).